The sequence spans 251 residues: Chlorophyll a-b binding protein 4, chloroplastic (251 aa).

Phosphoserine is present on Ser35. Trp57 contributes to the chlorophyll b binding site. Chlorophyll a-binding residues include Phe77 and Glu96. Arg101 is a chlorophyll b binding site. 2 consecutive transmembrane segments (helical) span residues 102 to 122 (WAML…IGII) and 135 to 155 (YFAS…YVEI). Chlorophyll b contacts are provided by Ser138, Val144, Glu154, and Arg157. Residues Lys204, Glu205, Asn208, Arg210, Gln222, and His237 each coordinate chlorophyll a.

This sequence belongs to the light-harvesting chlorophyll a/b-binding (LHC) protein family. The LHC complex consists of chlorophyll a-b binding proteins. Red-emitting heterodimer with LHCA1. Binds at least 14 chlorophylls (8 Chl-a and 6 Chl-b) and carotenoids such as lutein and neoxanthin. serves as cofactor. Photoregulated by reversible phosphorylation of its threonine residues.

The protein localises to the plastid. Its subcellular location is the chloroplast thylakoid membrane. Functionally, the light-harvesting complex (LHC) functions as a light receptor, it captures and delivers excitation energy to photosystems with which it is closely associated. The polypeptide is Chlorophyll a-b binding protein 4, chloroplastic (Arabidopsis thaliana (Mouse-ear cress)).